The sequence spans 226 residues: Cytidylate kinase (226 aa).

Residue 11 to 19 (GPASAGKST) participates in ATP binding.

This sequence belongs to the cytidylate kinase family. Type 1 subfamily.

It is found in the cytoplasm. It catalyses the reaction CMP + ATP = CDP + ADP. The catalysed reaction is dCMP + ATP = dCDP + ADP. The protein is Cytidylate kinase of Limosilactobacillus fermentum (strain NBRC 3956 / LMG 18251) (Lactobacillus fermentum).